The primary structure comprises 417 residues: NADH-quinone oxidoreductase subunit D (417 aa).

The protein belongs to the complex I 49 kDa subunit family. As to quaternary structure, NDH-1 is composed of 14 different subunits. Subunits NuoB, C, D, E, F, and G constitute the peripheral sector of the complex.

The protein localises to the cell inner membrane. The enzyme catalyses a quinone + NADH + 5 H(+)(in) = a quinol + NAD(+) + 4 H(+)(out). NDH-1 shuttles electrons from NADH, via FMN and iron-sulfur (Fe-S) centers, to quinones in the respiratory chain. The immediate electron acceptor for the enzyme in this species is believed to be ubiquinone. Couples the redox reaction to proton translocation (for every two electrons transferred, four hydrogen ions are translocated across the cytoplasmic membrane), and thus conserves the redox energy in a proton gradient. This chain is NADH-quinone oxidoreductase subunit D, found in Burkholderia cenocepacia (strain HI2424).